The following is a 31-amino-acid chain: Cytochrome b6-f complex subunit 6 (31 aa).

Residues 7 to 25 (YSGFLLAAPIPASAPFTGL) form a helical membrane-spanning segment.

This sequence belongs to the PetL family. In terms of assembly, the 4 large subunits of the cytochrome b6-f complex are cytochrome b6, subunit IV (17 kDa polypeptide, PetD), cytochrome f and the Rieske protein, while the 4 small subunits are PetG, PetL, PetM and PetN. The complex functions as a dimer.

It is found in the plastid. It localises to the chloroplast thylakoid membrane. Its function is as follows. Component of the cytochrome b6-f complex, which mediates electron transfer between photosystem II (PSII) and photosystem I (PSI), cyclic electron flow around PSI, and state transitions. PetL is important for photoautotrophic growth as well as for electron transfer efficiency and stability of the cytochrome b6-f complex. In Huperzia lucidula (Shining clubmoss), this protein is Cytochrome b6-f complex subunit 6.